The following is a 90-amino-acid chain: Small ribosomal subunit protein uS15 (90 aa).

This sequence belongs to the universal ribosomal protein uS15 family. In terms of assembly, part of the 30S ribosomal subunit. Forms a bridge to the 50S subunit in the 70S ribosome, contacting the 23S rRNA.

One of the primary rRNA binding proteins, it binds directly to 16S rRNA where it helps nucleate assembly of the platform of the 30S subunit by binding and bridging several RNA helices of the 16S rRNA. In terms of biological role, forms an intersubunit bridge (bridge B4) with the 23S rRNA of the 50S subunit in the ribosome. The sequence is that of Small ribosomal subunit protein uS15 from Campylobacter fetus subsp. fetus (strain 82-40).